The primary structure comprises 471 residues: Light-independent protochlorophyllide reductase subunit N (471 aa).

The [4Fe-4S] cluster site is built by Cys22, Cys47, and Cys107.

This sequence belongs to the BchN/ChlN family. Protochlorophyllide reductase is composed of three subunits; ChlL, ChlN and ChlB. Forms a heterotetramer of two ChlB and two ChlN subunits. The cofactor is [4Fe-4S] cluster.

The protein localises to the plastid. The protein resides in the chloroplast. The enzyme catalyses chlorophyllide a + oxidized 2[4Fe-4S]-[ferredoxin] + 2 ADP + 2 phosphate = protochlorophyllide a + reduced 2[4Fe-4S]-[ferredoxin] + 2 ATP + 2 H2O. The protein operates within porphyrin-containing compound metabolism; chlorophyll biosynthesis (light-independent). Component of the dark-operative protochlorophyllide reductase (DPOR) that uses Mg-ATP and reduced ferredoxin to reduce ring D of protochlorophyllide (Pchlide) to form chlorophyllide a (Chlide). This reaction is light-independent. The NB-protein (ChlN-ChlB) is the catalytic component of the complex. The sequence is that of Light-independent protochlorophyllide reductase subunit N from Huperzia lucidula (Shining clubmoss).